A 433-amino-acid chain; its full sequence is MESGKSPLEENLQEFTLKEDSELRFEVANGDVMLELVDGRAEVFGTELIQHKKYVFPAGSRVAVFTWKKAVVELVGKTESAYVAEQTPMIIYLNTHAALEQLREHAESVVMQQEQARGPSLMIVGPTDVGKTTVCRILCNYAVRVGRTPIFVDLDVGQGSISVPGTVGALYIEKTADVVEGFDKKAPLVYHFGNLSPGSNIPLYDLLVKQLAEAISKRRKSSQDATYGGVIINTCGWVKGEGYACLVNAAEEFEVDVVIVLDHERLYNELQRDLPSFVKILHQPKSGGVENRSKEVRISSRNAFVHKYFYGTRAMPLYPHTFELSFDEVQFCKIGCERLPIECLPFGMKVDDHRTKVVPIEPSEDLVHHLVSLSMCTAVDQSVLTTNVMGFIVITAVDMEREKLTVLSPQPYPLPSKILILSEVTFIDDKERT.

Residues E22, R61, and 128 to 133 (DVGKTT) contribute to the ATP site.

This sequence belongs to the Clp1 family. Clp1 subfamily.

It localises to the nucleus. In terms of biological role, required for endonucleolytic cleavage during polyadenylation-dependent pre-mRNA 3'-end formation. The sequence is that of Protein CLP1 homolog from Brugia malayi (Filarial nematode worm).